Here is a 370-residue protein sequence, read N- to C-terminus: Ubiquitin carboxyl-terminal hydrolase 12 (370 aa).

The Required for plasma membrane localization of USP12/WDR20 motif lies at 1-4; that stretch reads MEIL. The region spanning 39 to 369 is the USP domain; it reads FGLVNFGNTC…SGYILFYQSR (331 aa). Cys-48 (nucleophile) is an active-site residue. Basic and acidic residues predominate over residues 146 to 157; sequence QEKQNGRLRNGD. The disordered stretch occupies residues 146 to 168; it reads QEKQNGRLRNGDVDNEDNNSTPD. Cys-186, Cys-189, Cys-233, and Cys-236 together coordinate Zn(2+). His-317 serves as the catalytic Proton acceptor.

This sequence belongs to the peptidase C19 family. USP12/USP46 subfamily. In terms of assembly, interacts with WDR48. Interacts with WDR20; this interaction promotes translocation of the USP12 complex to the plasma membrane. Component of the USP12/WDR20/WDR48 deubiquitinating complex. Component of the USP12/DMWD/WDR48 deubiquitinating complex. Interacts with PHLPP1. Interacts with RBPJ. Interacts with CBP; this interaction blocks the acetyltransferase activity of CREBBP.

Its subcellular location is the nucleus. The protein localises to the cytoplasm. It localises to the cell membrane. The enzyme catalyses Thiol-dependent hydrolysis of ester, thioester, amide, peptide and isopeptide bonds formed by the C-terminal Gly of ubiquitin (a 76-residue protein attached to proteins as an intracellular targeting signal).. Its activity is regulated as follows. Activated by interaction with WDR20; WDR48 and DMWD through different allosteric mechanisms. Deubiquitinating enzyme that plays various roles in the regulation of the immune response and inflammation. During TCR engagement and activation, translocates into the cytoplasm and deubiquitinates its substrates LAT and TRAT1 and prevents their lysosome-dependent degradation to stabilize the TCR signaling complex at the plasma membrane. Plays an essential role in the selective LPS-induced macrophage response through the activation of NF-kappa-B pathway. In addition, promotes that antiviral immune response through targeting DNA sensor IFI16 to inhibit its proteasome-dependent degradation. Participates in the interferon signaling pathway and antiviral response independently of its deubiquitinase activity by maintaining nuclear phosphorylated STAT1 levels via inhibition of its CREBBP-mediated acetylation and subsequent dephosphorylation. Plays an intrinsic role in promoting the differentiation, activation and proliferation of CD4(+) T-cell by activating the NF-kappa-B signaling pathway through deubiquitinating and stabilizing B-cell lymphoma/leukemia 10/BCL10. In myeloid-derived suppressor cells promotes the activation of the NF-kappa-B via deubiquitination and stabilization of RELA. Regulates the 'Lys-63'-linked polyubiquitin chains of BAX and thereby modulates the mitochondrial apoptotic process. Negative regulator of NOTCH signaling that specifically deubiquitinates non-activated NOTCH receptors to target them for lysosomal degradation; deubiquitination of NOTCH stimulates its transport form late endosomes to lysosomes. Protects neurons against HTT/huntingtin-induced polyglutamine expansion-dependent neurodegeneration through regulation of autophagic flux. This function is independent of deubiquitinase activity or of other components of the USP12-WDR20-WDR48 deubiquitinating complex. In complex with WDR48, acts as a potential tumor suppressor by positively regulating PHLPP1 stability. This chain is Ubiquitin carboxyl-terminal hydrolase 12 (Usp12), found in Mus musculus (Mouse).